We begin with the raw amino-acid sequence, 684 residues long: Threonine--tRNA ligase (684 aa).

The region spanning 1–66 (MSTAASPAPA…DADVEVVPVP (66 aa)) is the TGS domain. Positions 261–567 (DHRKLGVELD…LTEHYAGAFP (307 aa)) are catalytic. Positions 366, 417, and 544 each coordinate Zn(2+).

It belongs to the class-II aminoacyl-tRNA synthetase family. Homodimer. Zn(2+) is required as a cofactor.

The protein localises to the cytoplasm. It carries out the reaction tRNA(Thr) + L-threonine + ATP = L-threonyl-tRNA(Thr) + AMP + diphosphate + H(+). Functionally, catalyzes the attachment of threonine to tRNA(Thr) in a two-step reaction: L-threonine is first activated by ATP to form Thr-AMP and then transferred to the acceptor end of tRNA(Thr). Also edits incorrectly charged L-seryl-tRNA(Thr). The sequence is that of Threonine--tRNA ligase from Mycobacterium sp. (strain KMS).